The chain runs to 80 residues: MAKLIAFALVASLCLSMVLCNPLPEEVQEEGLVRQKRVTCDVLSFEAKGIAVNHSACALHCIALRKKGGSCQNGVCVCRN.

The N-terminal stretch at methionine 1–cysteine 20 is a signal peptide. A propeptide spanning residues asparagine 21–arginine 37 is cleaved from the precursor. 3 cysteine pairs are disulfide-bonded: cysteine 40–cysteine 71, cysteine 57–cysteine 76, and cysteine 61–cysteine 78.

This sequence belongs to the invertebrate defensin family. Type 1 subfamily.

The protein localises to the secreted. It is found in the target cell membrane. In terms of biological role, potent broad-spectrum antibacterial peptide against both Gram-positive (B.subtilis, S.epidermidis, and S.aureus) and Gram-negative bacteria (E.coli, S.typhimurium, and P.aeruginosa). Is also active against all antibiotic-resistant bacterial strains tested. Induces apoptosis in C.albicans, but does not disrupt the fungal plasma membrane at all. Acts by permeabilizing the bacterial cell membrane, but not human membranes. Also shows potent anti-inflammatory activities, since it reduces both LPS-induced nitric oxide release and pro-inflammatory cytokine production. Anti-inflammatory activities are initiated by suppressing the binding of LPS to toll-like receptor 4 (TLR4), and subsequently inhibiting the phosphorylation of p38 mitogen-activated protein kinase (MAPK) and nuclear translocation of NF-kB (TNFRSF11A). Does not show hemolytic activity against human erythrocytes. The chain is Defensin coprisin from Copris tripartitus (Dung beetle).